The primary structure comprises 30 residues: Sperm protamine P5 (30 aa).

The disordered stretch occupies residues 1–30; the sequence is YRRRRRRGRRGRRRRGRRRRSRGRRRAHGG.

As to expression, testis.

It localises to the nucleus. The protein localises to the chromosome. Functionally, protamines substitute for histones in the chromatin of sperm during the haploid phase of spermatogenesis. They compact sperm DNA into a highly condensed, stable and inactive complex. The sequence is that of Sperm protamine P5 from Octopus vulgaris (Common octopus).